A 159-amino-acid polypeptide reads, in one-letter code: RNA pyrophosphohydrolase (159 aa).

One can recognise a Nudix hydrolase domain in the interval 6 to 149 (GFRPNVGIIL…KREVYRRALK (144 aa)). A Nudix box motif is present at residues 38–59 (GGINPDETPEDALYRELNEEVG).

The protein belongs to the Nudix hydrolase family. RppH subfamily. It depends on a divalent metal cation as a cofactor.

Functionally, accelerates the degradation of transcripts by removing pyrophosphate from the 5'-end of triphosphorylated RNA, leading to a more labile monophosphorylated state that can stimulate subsequent ribonuclease cleavage. This is RNA pyrophosphohydrolase from Pseudomonas putida (strain ATCC 700007 / DSM 6899 / JCM 31910 / BCRC 17059 / LMG 24140 / F1).